We begin with the raw amino-acid sequence, 259 residues long: 5'-nucleotidase SurE (259 aa).

4 residues coordinate a divalent metal cation: Asp8, Asp9, Ser40, and Asn92.

The protein belongs to the SurE nucleotidase family. The cofactor is a divalent metal cation.

It localises to the cytoplasm. It carries out the reaction a ribonucleoside 5'-phosphate + H2O = a ribonucleoside + phosphate. Functionally, nucleotidase that shows phosphatase activity on nucleoside 5'-monophosphates. The chain is 5'-nucleotidase SurE from Stenotrophomonas maltophilia (strain K279a).